The sequence spans 70 residues: DNA gyrase inhibitor YacG (70 aa).

4 residues coordinate Zn(2+): Cys-20, Cys-23, Cys-35, and Cys-39.

It belongs to the DNA gyrase inhibitor YacG family. Interacts with GyrB. Requires Zn(2+) as cofactor.

Functionally, inhibits all the catalytic activities of DNA gyrase by preventing its interaction with DNA. Acts by binding directly to the C-terminal domain of GyrB, which probably disrupts DNA binding by the gyrase. This is DNA gyrase inhibitor YacG from Rhizobium etli (strain ATCC 51251 / DSM 11541 / JCM 21823 / NBRC 15573 / CFN 42).